The following is an 884-amino-acid chain: Formin-like protein 11 (884 aa).

An N-terminal signal peptide occupies residues 1 to 18; the sequence is MVYFRQIFLMIIVVSLHC. The tract at residues 89–143 is disordered; that stretch reads AESASFSPWPAPSPSPFPNGGPIESPAYPPAPPRPIPPHLRRPLPQRTHPLEQPE. Composition is skewed to pro residues over residues 97 to 107 and 115 to 126; these read WPAPSPSPFPN and AYPPAPPRPIPP. A helical transmembrane segment spans residues 158–178; sequence ILVPVVASTASAIGFVVCVVG. Disordered stretches follow at residues 307–384, 416–469, and 512–532; these read SSDD…FSNK, SFPI…APLP, and MQSS…GKHL. Residues 329–343 are compositionally biased toward low complexity; that stretch reads SNASSASGSVNVGSS. Residues 346-358 are compositionally biased toward basic and acidic residues; the sequence is FSEHKLDIPECSR. 2 stretches are compositionally biased toward pro residues: residues 367 to 379 and 425 to 436; these read APPP…PPLP and QPRPPPPPPPPQ. An FH2 domain is found at 461-884; it reads LGKDGAPLPK…NSPSPLAPFR (424 aa).

This sequence belongs to the formin-like family. Class-I subfamily.

It is found in the membrane. Functionally, might be involved in the organization and polarity of the actin cytoskeleton. The sequence is that of Formin-like protein 11 (FH11) from Arabidopsis thaliana (Mouse-ear cress).